The primary structure comprises 414 residues: Ferredoxin--NAD(P)(+) reductase fdr (414 aa).

7–38 (DVVIVGAGHGGAQTAIALRQNGFAGTIAIIGA) lines the FAD pocket. 149–177 (KVVIIGGGYIGLEAAAVMAKFGKNVTLIE) is a binding site for NAD(+).

It belongs to the FAD-dependent oxidoreductase family. In terms of assembly, monomer. Carbazole 1,9a-dioxygenase complex consists of a terminal oxygenase component CarAa, a ferredoxin reductase component fdr and a ferredoxin component CarAc. The cofactor is FAD.

The enzyme catalyses 2 reduced [2Fe-2S]-[ferredoxin] + NAD(+) + H(+) = 2 oxidized [2Fe-2S]-[ferredoxin] + NADH. It carries out the reaction 2 reduced [2Fe-2S]-[ferredoxin] + NADP(+) + H(+) = 2 oxidized [2Fe-2S]-[ferredoxin] + NADPH. In terms of biological role, part of the multicomponent carbazole 1,9a-dioxygenase (CARDO), that converts carbazole (CAR) into 2-aminobiphenyl-2,3-diol. The sequence is that of Ferredoxin--NAD(P)(+) reductase fdr (fdr) from Sphingomonas sp.